The primary structure comprises 442 residues: Coiled-coil domain-containing protein 91 (442 aa).

The interval 1 to 16 is GGA1-binding motif; it reads MDDDDFGGFEAAETFD. Residues 1 to 27 are disordered; sequence MDDDDFGGFEAAETFDGEQGGNQAVSP. 2 positions are modified to phosphoserine: serine 43 and serine 46. Disordered stretches follow at residues 48-80 and 114-134; these read ELIL…ADSS and HGAL…SNSQ. 3 coiled-coil regions span residues 130–210, 253–318, and 346–408; these read VSNS…GHEA, HAQH…MKDV, and ARDQ…RRLD. The tract at residues 211 to 414 is homodimerization; the sequence is LSIIVDEYKA…RRLDQVTRQR (204 aa).

Homodimer. Interacts with GGA1, GGA2 and AP1G1.

The protein resides in the membrane. Its subcellular location is the golgi apparatus. The protein localises to the trans-Golgi network membrane. It is found in the trans-Golgi network. Functionally, involved in the regulation of membrane traffic through the trans-Golgi network (TGN). Functions in close cooperation with the GGAs in the sorting of hydrolases to lysosomes. This chain is Coiled-coil domain-containing protein 91 (Ccdc91), found in Mus musculus (Mouse).